The following is a 121-amino-acid chain: ATP synthase epsilon chain (121 aa).

The protein belongs to the ATPase epsilon chain family. F-type ATPases have 2 components, CF(1) - the catalytic core - and CF(0) - the membrane proton channel. CF(1) has five subunits: alpha(3), beta(3), gamma(1), delta(1), epsilon(1). CF(0) has three main subunits: a, b and c.

It is found in the cell membrane. Produces ATP from ADP in the presence of a proton gradient across the membrane. This Mycolicibacterium smegmatis (strain ATCC 700084 / mc(2)155) (Mycobacterium smegmatis) protein is ATP synthase epsilon chain.